A 248-amino-acid polypeptide reads, in one-letter code: Triosephosphate isomerase (248 aa).

2 residues coordinate substrate: N10 and K12. The Electrophile role is filled by H95. E165 functions as the Proton acceptor in the catalytic mechanism.

It belongs to the triosephosphate isomerase family. Homodimer.

The enzyme catalyses D-glyceraldehyde 3-phosphate = dihydroxyacetone phosphate. The protein operates within carbohydrate biosynthesis; gluconeogenesis. It functions in the pathway carbohydrate degradation; glycolysis; D-glyceraldehyde 3-phosphate from glycerone phosphate: step 1/1. The protein is Triosephosphate isomerase (TPI1) of Debaryomyces hansenii (strain ATCC 36239 / CBS 767 / BCRC 21394 / JCM 1990 / NBRC 0083 / IGC 2968) (Yeast).